The following is a 215-amino-acid chain: Adenylate kinase (215 aa).

10–15 (GAGKGT) provides a ligand contact to ATP. Residues 30 to 59 (STGDMLRAAVKAGTELGLKAKSVMDAGGLV) are NMP. Residues Thr31, Arg36, 57–59 (GLV), 85–88 (GFPR), and Gln92 contribute to the AMP site. The tract at residues 122–159 (GRRVHPASGRVYHTEYNPPKVAGKDDVSGEELVQREDD) is LID. Residues Arg123 and 132–133 (VY) contribute to the ATP site. AMP contacts are provided by Arg156 and Arg167. Gly201 contacts ATP.

This sequence belongs to the adenylate kinase family. Monomer.

It localises to the cytoplasm. The enzyme catalyses AMP + ATP = 2 ADP. It participates in purine metabolism; AMP biosynthesis via salvage pathway; AMP from ADP: step 1/1. Catalyzes the reversible transfer of the terminal phosphate group between ATP and AMP. Plays an important role in cellular energy homeostasis and in adenine nucleotide metabolism. This Ectopseudomonas mendocina (strain ymp) (Pseudomonas mendocina) protein is Adenylate kinase.